We begin with the raw amino-acid sequence, 261 residues long: Phosphatidylglycerol--prolipoprotein diacylglyceryl transferase (261 aa).

Helical transmembrane passes span 20–40 (LAIHWYAIFIVGGAALAVWLA), 54–74 (IIDFVLFAFPLGIVGARLYYV), and 88–108 (IIAIWDGGGAIYGSLIAGAIV). Residue Arg139 participates in a 1,2-diacyl-sn-glycero-3-phospho-(1'-sn-glycerol) binding. The next 2 membrane-spanning stretches (helical) occupy residues 175-195 (MPTFLFESIGTLSGFILVMVF) and 235-255 (ARVSQWLSVLLVILGIILFVY).

Belongs to the Lgt family.

Its subcellular location is the cell membrane. It carries out the reaction L-cysteinyl-[prolipoprotein] + a 1,2-diacyl-sn-glycero-3-phospho-(1'-sn-glycerol) = an S-1,2-diacyl-sn-glyceryl-L-cysteinyl-[prolipoprotein] + sn-glycerol 1-phosphate + H(+). It functions in the pathway protein modification; lipoprotein biosynthesis (diacylglyceryl transfer). In terms of biological role, catalyzes the transfer of the diacylglyceryl group from phosphatidylglycerol to the sulfhydryl group of the N-terminal cysteine of a prolipoprotein, the first step in the formation of mature lipoproteins. The protein is Phosphatidylglycerol--prolipoprotein diacylglyceryl transferase of Lactococcus lactis subsp. cremoris (strain MG1363).